The primary structure comprises 207 residues: Crossover junction endodeoxyribonuclease RuvC (207 aa).

Residues D11, E71, and D143 contribute to the active site. D11, E71, and D143 together coordinate Mg(2+).

Belongs to the RuvC family. Homodimer which binds Holliday junction (HJ) DNA. The HJ becomes 2-fold symmetrical on binding to RuvC with unstacked arms; it has a different conformation from HJ DNA in complex with RuvA. In the full resolvosome a probable DNA-RuvA(4)-RuvB(12)-RuvC(2) complex forms which resolves the HJ. Mg(2+) is required as a cofactor.

The protein localises to the cytoplasm. The enzyme catalyses Endonucleolytic cleavage at a junction such as a reciprocal single-stranded crossover between two homologous DNA duplexes (Holliday junction).. Functionally, the RuvA-RuvB-RuvC complex processes Holliday junction (HJ) DNA during genetic recombination and DNA repair. Endonuclease that resolves HJ intermediates. Cleaves cruciform DNA by making single-stranded nicks across the HJ at symmetrical positions within the homologous arms, yielding a 5'-phosphate and a 3'-hydroxyl group; requires a central core of homology in the junction. The consensus cleavage sequence is 5'-(A/T)TT(C/G)-3'. Cleavage occurs on the 3'-side of the TT dinucleotide at the point of strand exchange. HJ branch migration catalyzed by RuvA-RuvB allows RuvC to scan DNA until it finds its consensus sequence, where it cleaves and resolves the cruciform DNA. The chain is Crossover junction endodeoxyribonuclease RuvC from Methylobacterium radiotolerans (strain ATCC 27329 / DSM 1819 / JCM 2831 / NBRC 15690 / NCIMB 10815 / 0-1).